The following is a 99-amino-acid chain: Large ribosomal subunit protein uL23 (99 aa).

Belongs to the universal ribosomal protein uL23 family. As to quaternary structure, part of the 50S ribosomal subunit. Contacts protein L29, and trigger factor when it is bound to the ribosome.

Its function is as follows. One of the early assembly proteins it binds 23S rRNA. One of the proteins that surrounds the polypeptide exit tunnel on the outside of the ribosome. Forms the main docking site for trigger factor binding to the ribosome. This chain is Large ribosomal subunit protein uL23, found in Azotobacter vinelandii (strain DJ / ATCC BAA-1303).